We begin with the raw amino-acid sequence, 102 residues long: Large ribosomal subunit protein bL21 (102 aa).

This sequence belongs to the bacterial ribosomal protein bL21 family. Part of the 50S ribosomal subunit. Contacts protein L20.

This protein binds to 23S rRNA in the presence of protein L20. The chain is Large ribosomal subunit protein bL21 from Solidesulfovibrio magneticus (strain ATCC 700980 / DSM 13731 / RS-1) (Desulfovibrio magneticus).